We begin with the raw amino-acid sequence, 333 residues long: Phenylalanine--tRNA ligase alpha subunit (333 aa).

E254 lines the Mg(2+) pocket.

The protein belongs to the class-II aminoacyl-tRNA synthetase family. Phe-tRNA synthetase alpha subunit type 1 subfamily. In terms of assembly, tetramer of two alpha and two beta subunits. Requires Mg(2+) as cofactor.

Its subcellular location is the cytoplasm. It catalyses the reaction tRNA(Phe) + L-phenylalanine + ATP = L-phenylalanyl-tRNA(Phe) + AMP + diphosphate + H(+). In Xylella fastidiosa (strain M23), this protein is Phenylalanine--tRNA ligase alpha subunit.